A 109-amino-acid polypeptide reads, in one-letter code: Toxin YpjF (109 aa).

It belongs to the CbtA/YkfI/YpjF toxin family. Interacts with FtsZ but not MreB. Another group finds interaction with FtsZ and MreB.

Toxic component of a type IV toxin-antitoxin (TA) system. Acts as a dual toxin inhibitor that blocks cell division and cell elongation in genetically separable interactions with FtsZ and MreB. Overexpression results in inhibition of growth in liquid cultures. Overexpression leads to formation of lemon-shaped cells; inactivated by overexpression of cognate antitoxin YfjZ but not when the 2 genes are coexpressed from the same plasmid. Also neutralized by overexpression of non-cognate antitoxins YafW and CbeA. The sequence is that of Toxin YpjF (ypjF) from Escherichia coli (strain K12).